The following is a 60-amino-acid chain: UPF0434 protein PC1_1771 (60 aa).

The protein belongs to the UPF0434 family.

In Pectobacterium carotovorum subsp. carotovorum (strain PC1), this protein is UPF0434 protein PC1_1771.